The primary structure comprises 104 residues: Protein RnfH (104 aa).

A disordered region spans residues 80–104 (PLTADPKLNRKRRAKEKASAGKASN).

The protein belongs to the UPF0125 (RnfH) family.

This Alcanivorax borkumensis (strain ATCC 700651 / DSM 11573 / NCIMB 13689 / SK2) protein is Protein RnfH.